The primary structure comprises 1349 residues: ABC multidrug transporter G (1349 aa).

The 249-residue stretch at Arg51 to Lys299 folds into the ABC transporter 1 domain. Asn144 carries N-linked (GlcNAc...) asparagine glycosylation. The next 4 membrane-spanning stretches (helical) occupy residues Leu407–Phe427, Ser436–Met456, Ile492–Leu512, and Trp523–Leu543. The N-linked (GlcNAc...) asparagine glycan is linked to Asn549. The next 2 helical transmembrane spans lie at Ala550–Pro570 and Trp580–Val600. An N-linked (GlcNAc...) asparagine glycan is attached at Asn649. A helical membrane pass occupies residues Phe659 to Leu679. The ABC transporter 2 domain maps to Phe721–Ala963. Gly757–Thr764 provides a ligand contact to ATP. A glycan (N-linked (GlcNAc...) asparagine) is linked at Asn994. 6 consecutive transmembrane segments (helical) span residues Val1056 to Gly1076, Phe1085 to Phe1105, Ile1121 to Ala1143, Met1166 to Ala1186, Phe1193 to Val1213, and Trp1226 to Trp1246. Asn1287 carries N-linked (GlcNAc...) asparagine glycosylation. The chain crosses the membrane as a helical span at residues Thr1318 to Leu1338.

This sequence belongs to the ABC transporter superfamily. ABCG family. PDR (TC 3.A.1.205) subfamily.

It localises to the cell membrane. ABC efflux transporter that seems not to be able to transport azoles, nor rhodamine 6G (R-6G), a known substrate for many ABC transporters. The protein is ABC multidrug transporter G of Aspergillus fumigatus (strain ATCC MYA-4609 / CBS 101355 / FGSC A1100 / Af293) (Neosartorya fumigata).